We begin with the raw amino-acid sequence, 573 residues long: MISNFILFALFIVTIALITKPLGSYIFRVFNNERTYLDWLAKPFQRVYLLVLGESSKKEQTAKAYFFSLVSFSVMAFIFVLVILLLQGILPLNPQEIKGMSFPQALNTAVSFITNTNWQSYSGETGVSYFAQMLALAVQNFVSAAVGLCVAIALIRSVARHETATIGNFWNDLGKGVFWILLPISIVIAIVYIFQGVPQNVMAYLHVHTLAGTEQIIPQGPIASQEAIKSLGTNGGGFFNANSAHPYENPTVITNYIQMVSIFAIAAALTYTFGKWVGNTKQGWLIFGVMLVLFIISLVVMTISELHGLDFLHSKDIQDIYGQVGHLSNMEGKESRFGVFYSTLYNTVSTSASDGGVNSVLDSYSPLAGMMAMLNMAIGEVIFGGVGAGFYGFFMFLMLAVFIGSLMIGRAPSFLGKRIEANDMKWTMFALLIFPCCVLVFTGLAAVIPSVHQTLTNSGAHGFSEILYAYISGANNNGSAFAGLSANTNYLNITIALSMLIGRFGVIFAVIMLAGSLVKKKRSLQMSEISSLDTTSFIFAILVFFTILLIGGLTIFPALGLGPILDQLNLNFL.

The next 10 membrane-spanning stretches (helical) occupy residues 6 to 26 (ILFALFIVTIALITKPLGSYI), 66 to 86 (FFSLVSFSVMAFIFVLVILLL), 135 to 155 (ALAVQNFVSAAVGLCVAIALI), 177 to 197 (VFWILLPISIVIAIVYIFQGV), 257 to 277 (IQMVSIFAIAAALTYTFGKWV), 283 to 303 (GWLIFGVMLVLFIISLVVMTI), 382 to 402 (IFGGVGAGFYGFFMFLMLAVF), 428 to 448 (MFALLIFPCCVLVFTGLAAVI), 493 to 513 (ITIALSMLIGRFGVIFAVIML), and 537 to 557 (FIFAILVFFTILLIGGLTIFP).

The protein belongs to the KdpA family. The system is composed of three essential subunits: KdpA, KdpB and KdpC.

It is found in the cell inner membrane. Functionally, part of the high-affinity ATP-driven potassium transport (or Kdp) system, which catalyzes the hydrolysis of ATP coupled with the electrogenic transport of potassium into the cytoplasm. This subunit binds the periplasmic potassium ions and delivers the ions to the membrane domain of KdpB through an intramembrane tunnel. The sequence is that of Potassium-transporting ATPase potassium-binding subunit from Francisella tularensis subsp. holarctica (strain FTNF002-00 / FTA).